The sequence spans 621 residues: Glutamyl-tRNA(Gln) amidotransferase subunit B, mitochondrial (621 aa).

Residues 1–41 (MARLPTTELRKYLLTGQFTRRGCLHLRPSPLAPPIPPLRTL) constitute a mitochondrion transit peptide. 2 disordered regions span residues 26–86 (LRPS…DNQT) and 106–136 (SKLF…APFD). Low complexity-rich tracts occupy residues 38-57 (LRTL…QIIP) and 110-120 (SPASTPSSSSD).

Belongs to the GatB/GatE family. GatB subfamily. Subunit of the heterotrimeric GatCAB amidotransferase (AdT) complex, composed of A, B and C subunits.

The protein resides in the mitochondrion. It carries out the reaction L-glutamyl-tRNA(Gln) + L-glutamine + ATP + H2O = L-glutaminyl-tRNA(Gln) + L-glutamate + ADP + phosphate + H(+). Allows the formation of correctly charged Gln-tRNA(Gln) through the transamidation of misacylated Glu-tRNA(Gln) in the mitochondria. The reaction takes place in the presence of glutamine and ATP through an activated gamma-phospho-Glu-tRNA(Gln). The chain is Glutamyl-tRNA(Gln) amidotransferase subunit B, mitochondrial from Podospora anserina (strain S / ATCC MYA-4624 / DSM 980 / FGSC 10383) (Pleurage anserina).